We begin with the raw amino-acid sequence, 122 residues long: Large ribosomal subunit protein uL14 (122 aa).

Belongs to the universal ribosomal protein uL14 family. Part of the 50S ribosomal subunit. Forms a cluster with proteins L3 and L19. In the 70S ribosome, L14 and L19 interact and together make contacts with the 16S rRNA in bridges B5 and B8.

Functionally, binds to 23S rRNA. Forms part of two intersubunit bridges in the 70S ribosome. This chain is Large ribosomal subunit protein uL14, found in Chloroflexus aggregans (strain MD-66 / DSM 9485).